Reading from the N-terminus, the 249-residue chain is Flagellar brake protein YcgR (249 aa).

In terms of domain architecture, PilZ spans 117-236 (QRREFFRVDA…ERELQQVIFS (120 aa)).

Belongs to the YcgR family. In terms of assembly, monomer. Interacts with the flagellar basal bodies.

It is found in the bacterial flagellum basal body. Its function is as follows. Acts as a flagellar brake, regulating swimming and swarming in a bis-(3'-5') cyclic diguanylic acid (c-di-GMP)-dependent manner. Binds 1 c-di-GMP dimer per subunit. Increasing levels of c-di-GMP lead to decreased motility. This is Flagellar brake protein YcgR from Erwinia tasmaniensis (strain DSM 17950 / CFBP 7177 / CIP 109463 / NCPPB 4357 / Et1/99).